The chain runs to 1824 residues: E3 ubiquitin-protein ligase UBR1 (1824 aa).

Residues 107 to 178 (TVCGKVFKNG…KDQYCELHLA (72 aa)) form a UBR-type zinc finger. Disordered regions lie at residues 1006–1043 (KQAP…ENRA) and 1073–1093 (ADTE…DWED). The span at 1033–1043 (EQAREERENRA) shows a compositional bias: basic and acidic residues. The segment at 1126-1220 (FKCILCFENC…VEFQCPYCRT (95 aa)) adopts an RING-type; atypical zinc-finger fold.

It belongs to the E3 ubiquitin-protein ligase UBR1-like family.

It carries out the reaction S-ubiquitinyl-[E2 ubiquitin-conjugating enzyme]-L-cysteine + [acceptor protein]-L-lysine = [E2 ubiquitin-conjugating enzyme]-L-cysteine + N(6)-ubiquitinyl-[acceptor protein]-L-lysine.. It participates in protein modification; protein ubiquitination. Functionally, E3 ubiquitin-protein ligase which is a component of the N-end rule pathway. Recognizes and binds to proteins bearing specific N-terminal residues that are destabilizing according to the N-end rule, leading to their ubiquitination and subsequent degradation. In Drosophila melanogaster (Fruit fly), this protein is E3 ubiquitin-protein ligase UBR1.